A 63-amino-acid polypeptide reads, in one-letter code: Synergistic-type venom protein C9S3, chain 2 (63 aa).

3 disulfide bridges follow: C3–C24, C17–C42, and C46–C57.

This sequence belongs to the three-finger toxin family. Short-chain subfamily. Aminergic toxin sub-subfamily. Heterodimer of C9S3 chain 1 (AC P01408) and chain 2, linked by at least two disulfide bonds. As to expression, expressed by the venom gland.

The protein localises to the secreted. Its function is as follows. This protein shows a synergetic toxic effect in that it enhances the toxicity of other D.angusticeps toxins. The sequence is that of Synergistic-type venom protein C9S3, chain 2 from Dendroaspis angusticeps (Eastern green mamba).